The sequence spans 173 residues: Nuclear transcription factor Y subunit B-8 (173 aa).

The tract at residues 1 to 30 is disordered; it reads MAESQAKSPGGCGSHESGGDQSPRSLHVRE. Residue Ala2 is modified to N-acetylalanine. The DNA-binding element occupies 35 to 41; the sequence is LPIANIS. The subunit association domain (SAD) stretch occupies residues 62–73; it reads VQECVSEFISFV. The tract at residues 123-173 is disordered; sequence DTKGSAKGGDPNAKKDGQSSQNGQFSQLAHQGPYGNSQAQQHMMVPMPGTD. Residues 140–163 are compositionally biased toward polar residues; the sequence is QSSQNGQFSQLAHQGPYGNSQAQQ.

This sequence belongs to the NFYB/HAP3 subunit family. As to quaternary structure, heterotrimeric transcription factor composed of three components, NF-YA, NF-YB and NF-YC. NF-YB and NF-YC must interact and dimerize for NF-YA association and DNA binding. As to expression, expressed in flowers and mature rosettes.

The protein localises to the nucleus. Functionally, component of the NF-Y/HAP transcription factor complex. The NF-Y complex stimulates the transcription of various genes by recognizing and binding to a CCAAT motif in promoters. The sequence is that of Nuclear transcription factor Y subunit B-8 (NFYB8) from Arabidopsis thaliana (Mouse-ear cress).